Consider the following 554-residue polypeptide: Glypican-1 (554 aa).

The first 21 residues, 1–21 (MERLCWGWWWHLGILCLMHWA), serve as a signal peptide directing secretion. 7 cysteine pairs are disulfide-bonded: Cys-32-Cys-68, Cys-62-Cys-256, Cys-69-Cys-259, Cys-191-Cys-343, Cys-246-Cys-279, Cys-268-Cys-415, and Cys-272-Cys-401. 2 N-linked (GlcNAc...) asparagine glycosylation sites follow: Asn-79 and Asn-116. The disordered stretch occupies residues 346 to 369 (PKKTNKGSKSEERRRKGKATQEDK). Basic and acidic residues predominate over residues 353–369 (SKSEERRRKGKATQEDK). Residues Ser-486, Ser-488, and Ser-490 are each glycosylated (O-linked (Xyl...) (heparan sulfate) serine).

The protein belongs to the glypican family. Post-translationally, O-glycosylated with heparan sulfate side chains.

It is found in the cell membrane. It localises to the secreted. Its subcellular location is the extracellular space. Functionally, cell surface proteoglycan that bears heparan sulfate. The polypeptide is Glypican-1 (gpc1) (Xenopus tropicalis (Western clawed frog)).